The following is a 392-amino-acid chain: Vascular endothelial growth factor A, long form (392 aa).

2 disordered regions span residues 1-44 (MTDR…VEGV) and 73-174 (DKPI…GPGR). The span at 89 to 104 (PGPEKRGEEEKEEERG) shows a compositional bias: basic and acidic residues. Low complexity-rich tracts occupy residues 121-143 (AAVCADSAPAARAPQAPARASVP) and 158-174 (PRSPSRRGSASRAGPGR). 3 disulfide bridges follow: Cys-229/Cys-271, Cys-260/Cys-305, and Cys-264/Cys-307. Asn-278 carries N-linked (GlcNAc...) asparagine glycosylation. Positions 309–320 (PKKDRTKPEKKS) are enriched in basic and acidic residues. Residues 309–337 (PKKDRTKPEKKSVRGKGKGQKRKRKKSRF) are disordered. Basic residues predominate over residues 321–337 (VRGKGKGQKRKRKKSRF).

The protein belongs to the PDGF/VEGF growth factor family. Homodimer; disulfide-linked. Also found as heterodimer with PGF. Interacts with NRP1. Interacts with isoform 2 of BSG. Interacts with CD82; this interaction inhibits VEGFA-mediated signaling pathway. In terms of processing, produced by use of an alternative upstream CUG codon and post-translationally processed into the N-terminal N-VEGF form and the C-terminal secreted VEGFA form. As to expression, in developing embryos, expressed mainly in the choroid plexus, paraventricular neuroepithelium, placenta and kidney glomeruli. Also found in bronchial epithelium, adrenal gland and in seminiferous tubules of testis. High expression continues in kidney glomeruli and choroid plexus in adults.

It localises to the cytoplasm. The protein resides in the nucleus. Its subcellular location is the secreted. The protein localises to the endoplasmic reticulum. It is found in the golgi apparatus. It localises to the extracellular space. The protein resides in the extracellular matrix. Its subcellular location is the cell membrane. Participates in the induction of key genes involved in the response to hypoxia and in the induction of angiogenesis such as HIF1A. Involved in protecting cells from hypoxia-mediated cell death. Functionally, growth factor active in angiogenesis, vasculogenesis and endothelial cell growth. Induces endothelial cell proliferation, promotes cell migration, inhibits apoptosis and induces permeabilization of blood vessels. Binds to the FLT1/VEGFR1 and KDR/VEGFR2 receptors, heparan sulfate and heparin. Binds to the NRP1/neuropilin-1 receptor. Binding to NRP1 receptor initiates a signaling pathway needed for motor neuron axon guidance and cell body migration, including for the caudal migration of facial motor neurons from rhombomere 4 to rhombomere 6 during embryonic development. Also binds the DEAR/FBXW7-AS1 receptor. May play a role in increasing vascular permeability during lactation, when increased transport of molecules from the blood is required for efficient milk protein synthesis. The sequence is that of Vascular endothelial growth factor A, long form (Vegfa) from Mus musculus (Mouse).